The chain runs to 225 residues: 3-dehydroquinate dehydratase (225 aa).

3-dehydroquinate-binding positions include 30-32 and R62; that span reads EWR. Residue H118 is the Proton donor/acceptor of the active site. The active-site Schiff-base intermediate with substrate is K143. 3-dehydroquinate is bound by residues R186, S205, and Q209.

This sequence belongs to the type-I 3-dehydroquinase family. Homodimer.

It carries out the reaction 3-dehydroquinate = 3-dehydroshikimate + H2O. Its pathway is metabolic intermediate biosynthesis; chorismate biosynthesis; chorismate from D-erythrose 4-phosphate and phosphoenolpyruvate: step 3/7. Involved in the third step of the chorismate pathway, which leads to the biosynthesis of aromatic amino acids. Catalyzes the cis-dehydration of 3-dehydroquinate (DHQ) and introduces the first double bond of the aromatic ring to yield 3-dehydroshikimate. The sequence is that of 3-dehydroquinate dehydratase from Streptococcus thermophilus (strain ATCC BAA-250 / LMG 18311).